We begin with the raw amino-acid sequence, 846 residues long: ATR-interacting protein mus304 (846 aa).

Disordered regions lie at residues 20–40, 90–109, and 135–162; these read DVSVTRGSARPSPPRNNFDGI, QGSTSTQQMFPPPPPPQKKP, and EPQKMPEPKTSTSRITTSSISVQQKTTT. A compositionally biased stretch (low complexity) spans 144-162; it reads TSTSRITTSSISVQQKTTT. Coiled-coil stretches lie at residues 168–240 and 327–359; these read ATQS…LADE and EYSENEDQTKKRRNHFELELKQLLLHYARLQAK. The EEXXXDL motif motif lies at 504–510; sequence EELLFDL. The interval 651–681 is disordered; that stretch reads GAVQGSVSNGSTSASVSNPNQNSNSSTTQRG. Residues 655 to 676 show a composition bias toward low complexity; it reads GSVSNGSTSASVSNPNQNSNSS.

Belongs to the ATRIP family. Interacts with ATR/mei-41. Highly expressed in the oocyte and nurse cells from stage 5 onward and in embryos prior to during nuclear division 14. Then, it decreases to background levels during interphase 14. Weakly or not expressed in stage embryos and imaginal disks.

It is found in the cytoplasm. Functionally, DNA damage checkpoint protein required for chromosome break repair and for genomic stability during development. This chain is ATR-interacting protein mus304 (mus304), found in Drosophila melanogaster (Fruit fly).